The chain runs to 338 residues: Heat shock factor 2-binding protein (338 aa).

The tract at residues 1–20 is disordered; that stretch reads MAATVGDGSGTEEACRNMES. Positions 12–126 form a coiled coil; sequence EEACRNMESK…LLQQAEYCTQ (115 aa). Residues 18 to 55 form an interaction with BRME1 region; sequence MESKEEFVKVRKKDLERLTTEVMQIRDFLPRILNGELL. An interaction with BRCA2 region spans residues 87 to 338; that stretch reads ARLETAQADS…EDLRALDCNV (252 aa).

Interacts (via C-terminus) with BNC1. Associates with HSF2. The interaction seems to occur between the trimerization domain of HSF2 and the N-terminal hydrophilic region of HSF2BP. Interacts (via N-terminus) with BRME1. Interacts with BRCA2 and BRME1; the interactions are direct and allow the formation of a ternary complex. The complex BRME1:HSF2BP:BRCA2 interacts with SPATA22, MEIOB and RAD51. Sumoylated by UBE2I in response to MEKK1-mediated stimuli. Expressed in testis and, to a lesser extent, in lung and muscle.

It localises to the cytoplasm. Its subcellular location is the chromosome. Functionally, meiotic recombination factor component of recombination bridges involved in meiotic double-strand break repair. Modulates the localization of recombinases DMC1:RAD51 to meiotic double-strand break (DSB) sites through the interaction with BRCA2 and its recruitment during meiotic recombination. Indispensable for the DSB repair, homologous synapsis, and crossover formation that are needed for progression past metaphase I, is essential for spermatogenesis and male fertility. Required for proper recombinase recruitment in female meiosis. Inhibits BNC1 transcriptional activity during spermatogenesis, probably by sequestering it in the cytoplasm. May be involved in modulating HSF2 activation in testis. The protein is Heat shock factor 2-binding protein of Mus musculus (Mouse).